The following is a 187-amino-acid chain: Peptidyl-tRNA hydrolase (187 aa).

Tyrosine 16 is a tRNA binding site. Catalysis depends on histidine 21, which acts as the Proton acceptor. Positions 66, 68, and 114 each coordinate tRNA.

Belongs to the PTH family. As to quaternary structure, monomer.

Its subcellular location is the cytoplasm. The catalysed reaction is an N-acyl-L-alpha-aminoacyl-tRNA + H2O = an N-acyl-L-amino acid + a tRNA + H(+). Functionally, hydrolyzes ribosome-free peptidyl-tRNAs (with 1 or more amino acids incorporated), which drop off the ribosome during protein synthesis, or as a result of ribosome stalling. In terms of biological role, catalyzes the release of premature peptidyl moieties from peptidyl-tRNA molecules trapped in stalled 50S ribosomal subunits, and thus maintains levels of free tRNAs and 50S ribosomes. This is Peptidyl-tRNA hydrolase from Malacoplasma penetrans (strain HF-2) (Mycoplasma penetrans).